The chain runs to 453 residues: Chromosomal replication initiator protein DnaA (453 aa).

Residues 1-73 (MELSPQDLWT…ADVVEEILGY (73 aa)) are domain I, interacts with DnaA modulators. A domain II region spans residues 73–110 (YSIDIQLTSTQGENIAIVGETQVSAYYPTLSGEHPKPI). The domain III, AAA+ region stretch occupies residues 111–327 (KLNPKYTFSR…GALIRAITYI (217 aa)). Residues Gly-155, Gly-157, Lys-158, and Thr-159 each coordinate ATP. The tract at residues 328 to 453 (SISGLSMTVE…HLASRTQKTT (126 aa)) is domain IV, binds dsDNA.

Belongs to the DnaA family. Oligomerizes as a right-handed, spiral filament on DNA at oriC.

It is found in the cytoplasm. Functionally, plays an essential role in the initiation and regulation of chromosomal replication. ATP-DnaA binds to the origin of replication (oriC) to initiate formation of the DNA replication initiation complex once per cell cycle. Binds the DnaA box (a 9 base pair repeat at the origin) and separates the double-stranded (ds)DNA. Forms a right-handed helical filament on oriC DNA; dsDNA binds to the exterior of the filament while single-stranded (ss)DNA is stabiized in the filament's interior. The ATP-DnaA-oriC complex binds and stabilizes one strand of the AT-rich DNA unwinding element (DUE), permitting loading of DNA polymerase. After initiation quickly degrades to an ADP-DnaA complex that is not apt for DNA replication. Binds acidic phospholipids. The sequence is that of Chromosomal replication initiator protein DnaA from Gloeothece citriformis (strain PCC 7424) (Cyanothece sp. (strain PCC 7424)).